Consider the following 149-residue polypeptide: Transcriptional regulator MraZ (149 aa).

SpoVT-AbrB domains lie at 7–54 and 83–126; these read KYVN…GISH and AVQL…QPQN.

It belongs to the MraZ family. As to quaternary structure, forms oligomers.

The protein localises to the cytoplasm. It is found in the nucleoid. The sequence is that of Transcriptional regulator MraZ from Rickettsia peacockii (strain Rustic).